Consider the following 314-residue polypeptide: Olfactory receptor 1E1 (314 aa).

At 1 to 25 (MMGQNQTSISDFLLLGLPIQPEQQN) the chain is on the extracellular side. Residue Asn5 is glycosylated (N-linked (GlcNAc...) asparagine). A helical transmembrane segment spans residues 26–49 (LCYALFLAMYLTTLLGNLLIIVLI). The Cytoplasmic portion of the chain corresponds to 50–57 (RLDSHLHT). The helical transmembrane segment at 58–79 (PMYLFLSNLSFSDLCFSSVTIP) threads the bilayer. Residues 80–100 (KLLQNMQNQDPSIPYADCLTQ) lie on the Extracellular side of the membrane. Cys97 and Cys189 form a disulfide bridge. The helical transmembrane segment at 101 to 120 (MYFFLLFGDLESFLLVAMAY) threads the bilayer. At 121–139 (DRYVAICFALHYTAIMSPM) the chain is on the cytoplasmic side. The chain crosses the membrane as a helical span at residues 140-158 (LCLSLVALSWVLTTFHAML). Topologically, residues 159–195 (HTLLMARLCFCADNVIPHFFCDMSALLKLACSDTRVN) are extracellular. A helical membrane pass occupies residues 196–219 (EWVIFIMGGLIVVIPFLLILGSYA). Topologically, residues 220–236 (RIVSSILKVPSSKGICK) are cytoplasmic. The helical transmembrane segment at 237 to 259 (AFSTCGSHLSVVSLFYGTVIGLY) threads the bilayer. Topologically, residues 260–272 (LCPSANSSTLKET) are extracellular. The chain crosses the membrane as a helical span at residues 273-292 (VMAMMYTVVTPMLNPFIYSL). Topologically, residues 293 to 314 (RNGDMKGALSRVIHQKKTFFSL) are cytoplasmic.

The protein belongs to the G-protein coupled receptor 1 family.

The protein resides in the cell membrane. Its function is as follows. Odorant receptor. The protein is Olfactory receptor 1E1 (OR1E1) of Gorilla gorilla gorilla (Western lowland gorilla).